An 89-amino-acid polypeptide reads, in one-letter code: uncharacterized protein (89 aa).

This is an uncharacterized protein from Shigella flexneri.